A 284-amino-acid chain; its full sequence is 4-diphosphocytidyl-2-C-methyl-D-erythritol kinase (284 aa).

The active site involves Lys-14. 98–108 (PMGGGLGGGSS) provides a ligand contact to ATP. Asp-140 is an active-site residue.

The protein belongs to the GHMP kinase family. IspE subfamily.

It carries out the reaction 4-CDP-2-C-methyl-D-erythritol + ATP = 4-CDP-2-C-methyl-D-erythritol 2-phosphate + ADP + H(+). Its pathway is isoprenoid biosynthesis; isopentenyl diphosphate biosynthesis via DXP pathway; isopentenyl diphosphate from 1-deoxy-D-xylulose 5-phosphate: step 3/6. Its function is as follows. Catalyzes the phosphorylation of the position 2 hydroxy group of 4-diphosphocytidyl-2C-methyl-D-erythritol. The polypeptide is 4-diphosphocytidyl-2-C-methyl-D-erythritol kinase (Shewanella putrefaciens (strain CN-32 / ATCC BAA-453)).